The primary structure comprises 322 residues: Breast cancer metastasis-suppressor 1-like protein (322 aa).

The segment covering 1 to 16 has biased composition (basic and acidic residues); that stretch reads MPVHSREKKESNHNDM. Residues 1-56 are disordered; that stretch reads MPVHSREKKESNHNDMEVDYPENEGSSSEEDDSDSSSGSEEGDSSEMDDEDCERRR. A compositionally biased stretch (acidic residues) spans 17 to 51; the sequence is EVDYPENEGSSSEEDDSDSSSGSEEGDSSEMDDED. Coiled-coil stretches lie at residues 50 to 99 and 147 to 178; these read EDCE…QAQE and EKLL…ITSE.

This sequence belongs to the BRMS1 family.

Its subcellular location is the nucleus. In terms of biological role, involved in the histone deacetylase (HDAC1)-dependent transcriptional repression activity. This Xenopus laevis (African clawed frog) protein is Breast cancer metastasis-suppressor 1-like protein (brms1l).